We begin with the raw amino-acid sequence, 154 residues long: Methylglyoxal synthase (154 aa).

In terms of domain architecture, MGS-like spans 1–154 (MELTTRTIAA…RYMQQRLDLK (154 aa)). Substrate contacts are provided by residues His-19, Lys-23, 45–48 (TGTT), and 65–66 (SG). Asp-71 acts as the Proton donor/acceptor in catalysis. Residue His-98 coordinates substrate.

This sequence belongs to the methylglyoxal synthase family.

It carries out the reaction dihydroxyacetone phosphate = methylglyoxal + phosphate. Its function is as follows. Catalyzes the formation of methylglyoxal from dihydroxyacetone phosphate. In Yersinia pseudotuberculosis serotype O:1b (strain IP 31758), this protein is Methylglyoxal synthase.